A 424-amino-acid polypeptide reads, in one-letter code: Endo-beta-1,4-galactanase (424 aa).

The N-terminal stretch at 1 to 26 (MKNVLAVFVVLIFVLGAFGTSGPAEA) is a signal peptide. Residue 142 to 145 (DPAK) participates in substrate binding. The active-site Proton donor is E190. Residues 229 to 230 (TN) and H263 contribute to the substrate site. E288 functions as the Nucleophile in the catalytic mechanism. T292 provides a ligand contact to substrate. 4 residues coordinate Ca(2+): D297, D299, H301, and N303. K307 and D384 together coordinate substrate. Residues S392 and D395 each contribute to the Ca(2+) site.

Belongs to the glycosyl hydrolase 53 family. Ca(2+) is required as a cofactor.

It catalyses the reaction The enzyme specifically hydrolyzes (1-&gt;4)-beta-D-galactosidic linkages in type I arabinogalactans.. In terms of biological role, involved in galactan degradation. Degrades arabinose-free galactan to galactooligosaccharides, producing galactotetraose as the main product along with galactotriose, galactobiose, and galactose. May hydrolyze the beta-1,4-galactan linkages of the galactan portion of arabinogalactan type I, a pectic plant polysaccharide from which most of the arabinose has been removed. The polypeptide is Endo-beta-1,4-galactanase (ganB) (Bacillus licheniformis (strain ATCC 14580 / DSM 13 / JCM 2505 / CCUG 7422 / NBRC 12200 / NCIMB 9375 / NCTC 10341 / NRRL NRS-1264 / Gibson 46)).